The primary structure comprises 84 residues: Small ribosomal subunit protein uS17 (84 aa).

This sequence belongs to the universal ribosomal protein uS17 family. Part of the 30S ribosomal subunit.

Functionally, one of the primary rRNA binding proteins, it binds specifically to the 5'-end of 16S ribosomal RNA. The sequence is that of Small ribosomal subunit protein uS17 from Clostridium kluyveri (strain NBRC 12016).